The primary structure comprises 161 residues: 6,7-dimethyl-8-ribityllumazine synthase (161 aa).

5-amino-6-(D-ribitylamino)uracil-binding positions include W26, 58–60, and 81–83; these read AFE and VVI. Residue 86–87 participates in (2S)-2-hydroxy-3-oxobutyl phosphate binding; the sequence is GT. H89 acts as the Proton donor in catalysis. F114 serves as a coordination point for 5-amino-6-(D-ribitylamino)uracil. R128 contributes to the (2S)-2-hydroxy-3-oxobutyl phosphate binding site.

The protein belongs to the DMRL synthase family.

It catalyses the reaction (2S)-2-hydroxy-3-oxobutyl phosphate + 5-amino-6-(D-ribitylamino)uracil = 6,7-dimethyl-8-(1-D-ribityl)lumazine + phosphate + 2 H2O + H(+). It participates in cofactor biosynthesis; riboflavin biosynthesis; riboflavin from 2-hydroxy-3-oxobutyl phosphate and 5-amino-6-(D-ribitylamino)uracil: step 1/2. In terms of biological role, catalyzes the formation of 6,7-dimethyl-8-ribityllumazine by condensation of 5-amino-6-(D-ribitylamino)uracil with 3,4-dihydroxy-2-butanone 4-phosphate. This is the penultimate step in the biosynthesis of riboflavin. This is 6,7-dimethyl-8-ribityllumazine synthase from Nocardioides sp. (strain ATCC BAA-499 / JS614).